The chain runs to 166 residues: Peptidoglycan-associated lipoprotein (166 aa).

An N-terminal signal peptide occupies residues 1 to 21; that stretch reads MEMLKFGKFAALALAMAVAVG. Cys22 carries the N-palmitoyl cysteine lipid modification. A lipid anchor (S-diacylglycerol cysteine) is attached at Cys22. An OmpA-like domain is found at 54-166; the sequence is SEEAALRAIT…AQNRRVELRK (113 aa). Residues 147-166 form a disordered region; it reads VATGNDEQSWAQNRRVELRK.

The protein belongs to the Pal lipoprotein family. The Tol-Pal system is composed of five core proteins: the inner membrane proteins TolA, TolQ and TolR, the periplasmic protein TolB and the outer membrane protein Pal. They form a network linking the inner and outer membranes and the peptidoglycan layer.

The protein resides in the cell outer membrane. In terms of biological role, part of the Tol-Pal system, which plays a role in outer membrane invagination during cell division and is important for maintaining outer membrane integrity. In Pseudomonas putida (Arthrobacter siderocapsulatus), this protein is Peptidoglycan-associated lipoprotein.